Here is a 502-residue protein sequence, read N- to C-terminus: Lysine--tRNA ligase (502 aa).

Mg(2+)-binding residues include E398 and E405.

The protein belongs to the class-II aminoacyl-tRNA synthetase family. In terms of assembly, homodimer. Requires Mg(2+) as cofactor.

Its subcellular location is the cytoplasm. The enzyme catalyses tRNA(Lys) + L-lysine + ATP = L-lysyl-tRNA(Lys) + AMP + diphosphate. The polypeptide is Lysine--tRNA ligase (Thermosipho melanesiensis (strain DSM 12029 / CIP 104789 / BI429)).